Consider the following 122-residue polypeptide: Large ribosomal subunit protein uL14c (122 aa).

This sequence belongs to the universal ribosomal protein uL14 family. In terms of assembly, part of the 50S ribosomal subunit.

Its subcellular location is the plastid. It localises to the chloroplast. Its function is as follows. Binds to 23S rRNA. This is Large ribosomal subunit protein uL14c (rpl14) from Bigelowiella natans (Pedinomonas minutissima).